A 549-amino-acid chain; its full sequence is Glucose-6-phosphate isomerase (549 aa).

The Proton donor role is filled by E355. Catalysis depends on residues H386 and K514.

This sequence belongs to the GPI family.

It localises to the cytoplasm. The enzyme catalyses alpha-D-glucose 6-phosphate = beta-D-fructose 6-phosphate. Its pathway is carbohydrate biosynthesis; gluconeogenesis. It functions in the pathway carbohydrate degradation; glycolysis; D-glyceraldehyde 3-phosphate and glycerone phosphate from D-glucose: step 2/4. Its function is as follows. Catalyzes the reversible isomerization of glucose-6-phosphate to fructose-6-phosphate. In Salmonella arizonae (strain ATCC BAA-731 / CDC346-86 / RSK2980), this protein is Glucose-6-phosphate isomerase.